We begin with the raw amino-acid sequence, 1189 residues long: Magnesium-chelatase subunit H (1189 aa).

It belongs to the Mg-chelatase subunit H family.

It catalyses the reaction protoporphyrin IX + Mg(2+) + ATP + H2O = Mg-protoporphyrin IX + ADP + phosphate + 3 H(+). It participates in porphyrin-containing compound metabolism; bacteriochlorophyll biosynthesis (light-independent). Functionally, involved in bacteriochlorophyll pigment biosynthesis; introduces a magnesium ion into protoporphyrin IX to yield Mg-protoroporphyrin IX. This chain is Magnesium-chelatase subunit H (bchH), found in Rhodobacter capsulatus (strain ATCC BAA-309 / NBRC 16581 / SB1003).